The primary structure comprises 153 residues: Small ribosomal subunit protein uS19 (153 aa).

This sequence belongs to the universal ribosomal protein uS19 family.

This is Small ribosomal subunit protein uS19 (RPS15) from Elaeis oleifera (American oil palm).